A 137-amino-acid chain; its full sequence is uncharacterized protein (137 aa).

The interval 116–137 (ARPPRGSGGTRTARNGARTASE) is disordered. The segment covering 125-137 (TRTARNGARTASE) has biased composition (polar residues).

This is an uncharacterized protein from Mycobacterium bovis (strain ATCC BAA-935 / AF2122/97).